Reading from the N-terminus, the 701-residue chain is Polyribonucleotide nucleotidyltransferase (701 aa).

The Mg(2+) site is built by Asp-489 and Asp-495. The KH domain maps to 556–615; it reads PRIHTMKIHPDKIREVIGSGGKVIRSITEETGCAIDIEDDGTIRIASSDQASAEQAVKII. Positions 625 to 693 constitute an S1 motif domain; that stretch reads GQVYEGKVVR…RQGRVKLTMK (69 aa).

Belongs to the polyribonucleotide nucleotidyltransferase family. It depends on Mg(2+) as a cofactor.

It is found in the cytoplasm. The enzyme catalyses RNA(n+1) + phosphate = RNA(n) + a ribonucleoside 5'-diphosphate. Functionally, involved in mRNA degradation. Catalyzes the phosphorolysis of single-stranded polyribonucleotides processively in the 3'- to 5'-direction. The chain is Polyribonucleotide nucleotidyltransferase from Magnetococcus marinus (strain ATCC BAA-1437 / JCM 17883 / MC-1).